The chain runs to 626 residues: Forkhead box protein O1 (626 aa).

Over residues methionine 1–glycine 11 the composition is skewed to pro residues. 4 disordered regions span residues methionine 1–glycine 57, aspartate 90–asparagine 142, serine 218–glutamine 319, and proline 484–asparagine 519. Low complexity-rich tracts occupy residues asparagine 37–proline 48 and glutamine 101–proline 133. A DNA-binding region (fork-head) is located at residues tryptophan 144–alanine 238. The segment covering alanine 248–alanine 259 has biased composition (basic residues). Over residues glutamine 262 to serine 277 the composition is skewed to low complexity. Composition is skewed to polar residues over residues arginine 298–glycine 310 and proline 484–lysine 494.

Post-translationally, phosphorylated by AKT1; insulin-induced. IGF1 rapidly induces phosphorylation of Thr-28, Ser-240 and Ser-303. Phosphorylation of Ser-240 decreases DNA-binding activity and promotes the phosphorylation of Thr-28, and Ser-303, which leads to nuclear exclusion and loss of function. Phosphorylation of Ser-313 is independent of IGF1 and leads to reduced function.

The protein resides in the cytoplasm. The protein localises to the nucleus. Transcription factor that regulates metabolic homeostasis in response to oxidative stress. Binds to the consensus sequence 5'-TT[G/A]TTTTG-3' and the related Daf-16 family binding element (DBE) with consensus sequence 5'-TT[G/A]TTTAC-3'. Main regulator of redox balance and osteoblast numbers and controls bone mass. Orchestrates the endocrine function of the skeleton in regulating glucose metabolism. Also acts as a key regulator of chondrogenic commitment of skeletal progenitor cells in response to lipid availability: when lipids levels are low, translocates to the nucleus and promotes expression of sox9, which induces chondrogenic commitment and suppresses fatty acid oxidation. Acts synergistically with atf4 to suppress osteocalcin/bglap activity, increasing glucose levels and triggering glucose intolerance and insulin insensitivity. Also suppresses the transcriptional activity of runx2, an upstream activator of osteocalcin/bglap. May act as a positive regulator of apoptosis in cardiac smooth muscle cells as a result of its transcriptional activation of pro-apoptotic genes. The polypeptide is Forkhead box protein O1 (Xenopus tropicalis (Western clawed frog)).